A 531-amino-acid polypeptide reads, in one-letter code: Chaperonin GroEL, chloroplastic (531 aa).

ATP contacts are provided by residues 30–33, 87–91, Gly415, 481–483, and Asp497; these read TLGP, DGTTT, and NAA.

It belongs to the chaperonin (HSP60) family. Forms a cylinder of 14 subunits composed of two heptameric rings stacked back-to-back. Interacts with the co-chaperonin GroES.

The protein resides in the plastid. Its subcellular location is the chloroplast. The enzyme catalyses ATP + H2O + a folded polypeptide = ADP + phosphate + an unfolded polypeptide.. Functionally, together with its co-chaperonin GroES, plays an essential role in assisting protein folding. The GroEL-GroES system forms a nano-cage that allows encapsulation of the non-native substrate proteins and provides a physical environment optimized to promote and accelerate protein folding. The sequence is that of Chaperonin GroEL, chloroplastic from Emiliania huxleyi (Coccolithophore).